The sequence spans 284 residues: RNase adapter protein RapZ (284 aa).

Residue 8–15 participates in ATP binding; that stretch reads GRSGSGKS. GTP is bound at residue 56–59; sequence DVRN. The segment at 266-284 is RNA-binding; it reads RSRGKNVQSRHRTLEKRKS.

This sequence belongs to the RapZ-like family. RapZ subfamily. In terms of assembly, homotrimer.

Its function is as follows. Modulates the synthesis of GlmS, by affecting the processing and stability of the regulatory small RNA GlmZ. When glucosamine-6-phosphate (GlcN6P) concentrations are high in the cell, RapZ binds GlmZ and targets it to cleavage by RNase E. Consequently, GlmZ is inactivated and unable to activate GlmS synthesis. Under low GlcN6P concentrations, RapZ is sequestered and inactivated by an other regulatory small RNA, GlmY, preventing GlmZ degradation and leading to synthesis of GlmS. The polypeptide is RNase adapter protein RapZ (Klebsiella oxytoca).